The primary structure comprises 202 residues: Odorant-binding protein 59a (202 aa).

Positions M1–A20 are cleaved as a signal peptide. Positions H43–R53 are enriched in basic and acidic residues. The interval H43–N105 is disordered. The span at G54–Y65 shows a compositional bias: gly residues.

It belongs to the PBP/GOBP family. In terms of tissue distribution, expressed in non-neuronal cells in hygrosensitive sensilla in the second chamber of the sacculus of the antenna third segment (at protein level).

It is found in the secreted. Its function is as follows. Odorant-binding protein required for hygrotaxis behavior in humidity-detecting sensilla. The chain is Odorant-binding protein 59a from Drosophila melanogaster (Fruit fly).